The following is a 319-amino-acid chain: Beta-ketoacyl-[acyl-carrier-protein] synthase III (319 aa).

Active-site residues include Cys-113 and His-246. The segment at 247–251 (QANIR) is ACP-binding. Asn-276 is a catalytic residue.

Belongs to the thiolase-like superfamily. FabH family. Homodimer.

The protein localises to the cytoplasm. The enzyme catalyses malonyl-[ACP] + acetyl-CoA + H(+) = 3-oxobutanoyl-[ACP] + CO2 + CoA. It functions in the pathway lipid metabolism; fatty acid biosynthesis. Functionally, catalyzes the condensation reaction of fatty acid synthesis by the addition to an acyl acceptor of two carbons from malonyl-ACP. Catalyzes the first condensation reaction which initiates fatty acid synthesis and may therefore play a role in governing the total rate of fatty acid production. Possesses both acetoacetyl-ACP synthase and acetyl transacylase activities. Its substrate specificity determines the biosynthesis of branched-chain and/or straight-chain of fatty acids. In Ehrlichia ruminantium (strain Welgevonden), this protein is Beta-ketoacyl-[acyl-carrier-protein] synthase III.